Reading from the N-terminus, the 90-residue chain is Iron oxidase (90 aa).

The tat-type signal signal peptide spans Met1–Ala37. 4 residues coordinate [4Fe-4S] cluster: Cys57, Cys60, Cys69, and Cys82.

Belongs to the high-potential iron-sulfur protein (HiPIP) family. In terms of assembly, homomultimer. In terms of processing, predicted to be exported by the Tat system. The position of the signal peptide cleavage has been experimentally proven.

It localises to the periplasm. Functionally, catalyzes the oxidation of Fe(2+) to Fe(3+) coupled to cytochrome c552 reduction. This chain is Iron oxidase (iro), found in Acidithiobacillus ferrooxidans (Thiobacillus ferrooxidans).